Here is a 660-residue protein sequence, read N- to C-terminus: WD repeat-containing protein 48 homolog (660 aa).

8 WD repeats span residues 23–78 (MHRS…RDLH), 84–120 (HHTD…CMST), 123–162 (THRD…KLTA), 174–213 (GNKD…KLMK), 216–255 (GHTD…CISS), 258–297 (CHSE…TAQL), 300–341 (IEDA…ISVE), and 362–401 (PGAA…KVCD).

Belongs to the WD repeat WDR48 family.

Functionally, regulator of deubiquitinating complexes. Activates deubiquitination by increasing the catalytic turnover without increasing the affinity of deubiquitinating enzymes for the substrate. The chain is WD repeat-containing protein 48 homolog from Brugia malayi (Filarial nematode worm).